The following is a 486-amino-acid chain: Adenylate kinase 8 (486 aa).

Adenylate kinase stretches follow at residues Pro-58 to Cys-258 and Pro-269 to Val-471. Position 67-72 (Ala-67–Thr-72) interacts with ATP. Residues Thr-87–Val-112 are NMP 1. Residues Ala-139–Lys-142 and Arg-202 each bind AMP. The segment at Gly-176–Thr-205 is LID 1. ATP is bound at residue Gly-278–Leu-283. The segment at Cys-298–Val-327 is NMP 2. AMP is bound by residues Gln-325–Val-327 and Gly-354–Arg-357. An LID 2 region spans residues Leu-391–His-424. Position 392 (Arg-392) interacts with ATP. Arg-432 contributes to the AMP binding site.

Belongs to the adenylate kinase family.

It is found in the cytoplasm. The protein resides in the cytosol. The catalysed reaction is AMP + ATP = 2 ADP. The enzyme catalyses a 2'-deoxyribonucleoside 5'-diphosphate + ATP = a 2'-deoxyribonucleoside 5'-triphosphate + ADP. It carries out the reaction a ribonucleoside 5'-diphosphate + ATP = a ribonucleoside 5'-triphosphate + ADP. Functionally, nucleoside monophosphate (NMP) kinase that catalyzes the reversible transfer of the terminal phosphate group between nucleoside triphosphates and monophosphates. Has highest activity toward AMP, and weaker activity toward dAMP, CMP and dCMP. Also displays broad nucleoside diphosphate kinase activity. This chain is Adenylate kinase 8 (ak8), found in Danio rerio (Zebrafish).